The chain runs to 85 residues: Small ribosomal subunit protein bS20 (85 aa).

It belongs to the bacterial ribosomal protein bS20 family.

Binds directly to 16S ribosomal RNA. This chain is Small ribosomal subunit protein bS20, found in Cytophaga hutchinsonii (strain ATCC 33406 / DSM 1761 / CIP 103989 / NBRC 15051 / NCIMB 9469 / D465).